Consider the following 466-residue polypeptide: Asparagine--tRNA ligase (466 aa).

Belongs to the class-II aminoacyl-tRNA synthetase family. As to quaternary structure, homodimer.

The protein resides in the cytoplasm. It catalyses the reaction tRNA(Asn) + L-asparagine + ATP = L-asparaginyl-tRNA(Asn) + AMP + diphosphate + H(+). The protein is Asparagine--tRNA ligase of Syntrophobacter fumaroxidans (strain DSM 10017 / MPOB).